We begin with the raw amino-acid sequence, 185 residues long: Ribosome-recycling factor (185 aa).

The protein belongs to the RRF family.

The protein localises to the cytoplasm. In terms of biological role, responsible for the release of ribosomes from messenger RNA at the termination of protein biosynthesis. May increase the efficiency of translation by recycling ribosomes from one round of translation to another. This is Ribosome-recycling factor from Pelobacter propionicus (strain DSM 2379 / NBRC 103807 / OttBd1).